The sequence spans 207 residues: Glycerol-3-phosphate acyltransferase (207 aa).

6 helical membrane-spanning segments follow: residues 7–27 (YALA…LVIV), 58–78 (LATF…FTLL), 83–103 (VGFV…WLGF), 116–136 (LAFV…LGLF), 141–161 (ISSL…WLMG), and 166–186 (LILA…RENI).

Belongs to the PlsY family. As to quaternary structure, probably interacts with PlsX.

Its subcellular location is the cell inner membrane. It catalyses the reaction an acyl phosphate + sn-glycerol 3-phosphate = a 1-acyl-sn-glycero-3-phosphate + phosphate. Its pathway is lipid metabolism; phospholipid metabolism. Its function is as follows. Catalyzes the transfer of an acyl group from acyl-phosphate (acyl-PO(4)) to glycerol-3-phosphate (G3P) to form lysophosphatidic acid (LPA). This enzyme utilizes acyl-phosphate as fatty acyl donor, but not acyl-CoA or acyl-ACP. In Hyphomonas neptunium (strain ATCC 15444), this protein is Glycerol-3-phosphate acyltransferase.